The sequence spans 449 residues: FAD-linked oxidoreductase janO (449 aa).

One can recognise an FAD-binding PCMH-type domain in the interval 32 to 203; that stretch reads PDAQPLAIIK…TRFHLNTRPL (172 aa).

The protein belongs to the oxygen-dependent FAD-linked oxidoreductase family. The cofactor is FAD.

The protein operates within secondary metabolite biosynthesis. FAD-linked oxidoreductase; part of the gene cluster that mediates the biosynthesis of the indole diterpenes janthitremanes such as shearinine K or shearinine A. The geranylgeranyl diphosphate (GGPP) synthase janG catalyzes the first step in janthitremane biosynthesis via conversion of farnesyl pyrophosphate and isopentyl pyrophosphate into geranylgeranyl pyrophosphate (GGPP). Condensation of indole-3-glycerol phosphate with GGPP by the prenyl transferase janC then forms 3-geranylgeranylindole (3-GGI). Epoxidation by the FAD-dependent monooxygenase janM leads to a epoxidized-GGI that is substrate of the terpene cyclase janB for cyclization to yield paspaline. Paspaline is subsequently converted to 13-desoxypaspaline by the cytochrome P450 monooxygenase janP, via beta-PC-M6 in a series of alpha-face oxidations. The cytochrome P450 monooxygenase janQ is proposed to carry out sequential beta-face oxidation steps at C-7 and C-13 of 13-desoxypaspaline to form paspalicine and paspalinine respectively. The indole diterpene prenyltransferase janD may then convert paspalinine into shearinine K which is substrate of janO and/or additional enzymes for oxidation and cyclization to generate shearinine A. The chain is FAD-linked oxidoreductase janO from Penicillium janthinellum (Penicillium vitale).